Consider the following 245-residue polypeptide: Ribonuclease 3 (245 aa).

An RNase III domain is found at Leu-18 to Gly-146. Glu-59 is a binding site for Mg(2+). Asp-63 is an active-site residue. 2 residues coordinate Mg(2+): Asp-132 and Glu-135. Residue Glu-135 is part of the active site. One can recognise a DRBM domain in the interval Asp-173–Asp-242.

The protein belongs to the ribonuclease III family. In terms of assembly, homodimer. Requires Mg(2+) as cofactor.

The protein resides in the cytoplasm. It catalyses the reaction Endonucleolytic cleavage to 5'-phosphomonoester.. In terms of biological role, digests double-stranded RNA. Involved in the processing of primary rRNA transcript to yield the immediate precursors to the large and small rRNAs (23S and 16S). Processes some mRNAs, and tRNAs when they are encoded in the rRNA operon. Processes pre-crRNA and tracrRNA of type II CRISPR loci if present in the organism. The sequence is that of Ribonuclease 3 from Borreliella afzelii (strain PKo) (Borrelia afzelii).